The sequence spans 464 residues: ATP-dependent protease ATPase subunit HslU (464 aa).

Residues Val18, 60–65 (GVGKTE), Asp277, Glu342, and Arg414 contribute to the ATP site.

This sequence belongs to the ClpX chaperone family. HslU subfamily. A double ring-shaped homohexamer of HslV is capped on each side by a ring-shaped HslU homohexamer. The assembly of the HslU/HslV complex is dependent on binding of ATP.

The protein localises to the cytoplasm. In terms of biological role, ATPase subunit of a proteasome-like degradation complex; this subunit has chaperone activity. The binding of ATP and its subsequent hydrolysis by HslU are essential for unfolding of protein substrates subsequently hydrolyzed by HslV. HslU recognizes the N-terminal part of its protein substrates and unfolds these before they are guided to HslV for hydrolysis. This chain is ATP-dependent protease ATPase subunit HslU, found in Lactobacillus leichmannii.